The chain runs to 316 residues: uncharacterized protein (316 aa).

The region spanning 26–98 (ERIDRFLAGA…IPLDVVYEDA (73 aa)) is the S4 RNA-binding domain. The active site involves Asp148.

Belongs to the pseudouridine synthase RluA family.

The catalysed reaction is a uridine in RNA = a pseudouridine in RNA. This is an uncharacterized protein from Chloroflexus aurantiacus (strain ATCC 29366 / DSM 635 / J-10-fl).